The chain runs to 309 residues: Aromatic prenyltransferase (309 aa).

Belongs to the aromatic prenyltransferase family.

Its function is as follows. Prenyltransferase that attaches isoprenoid moieties to carbon atoms of aromatic substrates in an enzyme-catalyzed Friedel-Crafts reaction. Shows specificity for dimethylallyl diphosphate (DMAPP) and does not accept geranyl diphosphate (GPP) or isopentenyl diphosphate (IPP). Prenylates the artificial substrate 2,7-dihydroxynaphthalene (2,7-DHN), as well as dihydrophenazine-1-carboxylic acid and 4-hydroxybenzoic acid at lower levels. Only traces of products are detected with aspulvinone E or flaviolin as substrates; and no product is formed with L-tryptophan, L-tyrosine, or 4-hydroxyphenylpyruvate. Ptf seems no to be involved in the prenylation reaction in the biosynthesis of aspulvinone H and J and the physiological function of ptf remains unknown. This Sclerotinia sclerotiorum (strain ATCC 18683 / 1980 / Ss-1) (White mold) protein is Aromatic prenyltransferase.